We begin with the raw amino-acid sequence, 299 residues long: MSIAQQLMDMGFPADKAEAAAGNNRNLDQALDWIEKDGAGVPMETDAPAQAAPGAADSGAPPVAASFKCDDCGKLLANDDAIMFHASKTKHENFSESSEAIKPLTAEEKAAKVLEIREKIKVHQAKKAKLEAEENREKEKKRREDGKAMISHKEAARDREIREAAQDRRREKNEDEIARKRVLEQIRLDKEARKAKASGQPVPEAKPAPSAAPVAPPKDYSTTTLQFRLLDGQTVRQQFEANEPLAMVRAWVETNHANGVPFTLMTPFPRKVFTEDDMGTPLKVLNLVPSANVILNRAA.

3 disordered regions span residues 39-61 (AGVPMETDAPAQAAPGAADSGAP), 127-176 (KAKL…NEDE), and 191-218 (EARKAKASGQPVPEAKPAPSAAPVAPPK). The segment covering 46 to 61 (DAPAQAAPGAADSGAP) has biased composition (low complexity). Residues 111–179 (AKVLEIREKI…REKNEDEIAR (69 aa)) adopt a coiled-coil conformation. A compositionally biased stretch (basic and acidic residues) spans 128–176 (AKLEAEENREKEKKRREDGKAMISHKEAARDREIREAAQDRRREKNEDE). Residues 201–213 (PVPEAKPAPSAAP) show a composition bias toward low complexity. The UBX domain maps to 218 to 295 (KDYSTTTLQF…NLVPSANVIL (78 aa)).

In terms of assembly, interacts with cdc-48.1 (via N-terminus) and cdc-48.2 (via N-terminus) in vitro; the interaction with cdc-48.1 is not detected in vivo. As to expression, expressed in the germline (at protein level). Expressed in spermatocytes but not in mature sperm (at protein level). Ubiquitously expressed. Predominantly expressed in the spermatheca.

It is found in the cytoplasm. It localises to the perinuclear region. Its function is as follows. Ubiquitin-binding protein which acts as an adapter for ATPase cdc-48.1 and/or cdc-48.2, conferring substrate specificity. Together with ubxn-2 and ubxn-3, plays a role in hermaphrodite spermatogenesis probably by promoting the degradation of sex determination terminal factor tra-1. The sequence is that of UBX domain-containing protein 1 from Caenorhabditis elegans.